Here is a 177-residue protein sequence, read N- to C-terminus: MRSNTCVLEQHDSECINLILLVNATSFTKQQQQQHNFNYQRLQHRITPPPPPSSPLLPKKEFNSIDLSILDKQLYLDNNNNNNNNTINNNTNNIKKDNNDCDDDDDSKSDKNSDDDTNDSDVNSNNNNGNHQKKKINKKLKKDGTNHLKRFKKLNHIKKKLININSILVSNVSPINQ.

Low complexity-rich tracts occupy residues 78–93 (NNNN…NTNN) and 120–130 (SDVNSNNNNGN). The disordered stretch occupies residues 78 to 146 (NNNNNNNNTI…NKKLKKDGTN (69 aa)). The segment covering 131–146 (HQKKKINKKLKKDGTN) has biased composition (basic residues).

This is an uncharacterized protein from Dictyostelium discoideum (Social amoeba).